Consider the following 550-residue polypeptide: Envelope glycoprotein E (550 aa).

A signal peptide spans 1–23; it reads MELLAASRACIFFGLVTVLDAWG. The Virion surface portion of the chain corresponds to 24–408; that stretch reads VQQVELSEGA…GAWTRHYLAF (385 aa). N-linked (GlcNAc...) asparagine; by host glycosylation is present at N47. Positions 65–91 are interaction with gI; sequence CAGDISVKKVCVSHSLCEDNIIIGKHC. N-linked (GlcNAc...) asparagine; by host glycans are attached at residues N109, N122, and N241. 2 disulfide bridges follow: C247–C273 and C256–C265. The N-linked (GlcNAc...) asparagine; by host glycan is linked to N291. A disulfide bridge links C292 with C303. A helical transmembrane segment spans residues 409–425; it reads LLVIICTCAALLVALVV. Residues 426–550 lie on the Intravirion side of the membrane; that stretch reads WGCILYIRSN…VASKLKSILK (125 aa). The short motif at 449–452 is the Internalization motif element; the sequence is YTSV. Positions 468 to 482 are acidic; sequence ASDSDDSFDSDSDEE. A compositionally biased stretch (acidic residues) spans 471-484; sequence SDDSFDSDSDEELE. Residues 471 to 513 form a disordered region; that stretch reads SDDSFDSDSDEELEYPPPPKPAPQLPPYQFVDGGDAPSGRSGF. The span at 485–496 shows a compositional bias: pro residues; it reads YPPPPKPAPQLP.

The protein belongs to the alphaherpesvirinae glycoprotein E family. Interacts with gI. Post-translationally, phosphorylated on serines within the acidic cluster. Phosphorylation determines whether endocytosed viral gE traffics to the trans-Golgi network or recycles to the cell membrane.

Its subcellular location is the virion membrane. It localises to the host cell membrane. The protein localises to the host cell junction. The protein resides in the host Golgi apparatus membrane. It is found in the host endosome membrane. In terms of biological role, in epithelial cells, the heterodimer gE/gI is required for the cell-to-cell spread of the virus, by sorting nascent virions to cell junctions. Once the virus reaches the cell junctions, virus particles can spread to adjacent cells extremely rapidly through interactions with cellular receptors that accumulate at these junctions. Implicated in basolateral spread in polarized cells. In neuronal cells, gE/gI is essential for the anterograde spread of the infection throughout the host nervous system. Together with US9, the heterodimer gE/gI is involved in the sorting and transport of viral structural components toward axon tips. This is Envelope glycoprotein E (gE) from Equus caballus (Horse).